Here is a 266-residue protein sequence, read N- to C-terminus: MTSLMCRDDALVQVLNKAGYNPILLPRTGLEPPEIYLYEQGVLRRWGRLATAVPAGSLPDTLQEGEQADISHSETSRKSLQAAGNFLNDALRCIGVNSAPKLDLSFARGAVVTFSFSGVTWRGLDPADIGAALNQGFDPAGLSEEKLRLGMVHVAYDYAYADAIDMTLATDGSAKVDVQALNINGFIDLGGKAECEVKSSTTISFKGKGKPAAFACKLGQVKRAKNRWTFNAREVVGQGFAPEEGAAEPYLLRRGQVLIVEDMQAT.

Cys6 is lipidated: S-palmitoyl cysteine. Transmembrane regions (beta stranded) follow at residues 70 to 86 (ISHS…AGNF), 99 to 117 (APKL…FSFS), 163 to 180 (AIDM…DVQA), and 189 to 205 (LGGK…TISF). The tract at residues 245–266 (GAAEPYLLRRGQVLIVEDMQAT) is C-terminal region.

This sequence belongs to the bacterial gasdermin family. Monomer. As to quaternary structure, forms large, homooligomeric ring-shaped pores when inserted in membranes. Post-translationally, cleavage by the adjacently encoded protease (probably ISF6_0256) predicted to occur between Glu-244 and Gly-245 relieves autoinhibition, releasing the N-terminus which initiates loss of cell integrity. In terms of processing, palmitoylation helps stabilize the inactive state; may self palmitoylate. Palmitoylation plays a significant role in pore formation.

The protein localises to the cytoplasm. It is found in the cell inner membrane. The full-length protein before cleavage is inactive: intramolecular interactions between the N-terminal domain and the C-terminal region as well as the lipid modification, mediate autoinhibition. The pyroptosis-like-inducing activity is carried by the released N-terminal domain (Gasdermin bGSDM, N-terminus). Functionally, precursor of a pore-forming protein involved in defense against bacteriophages. Cleavage of this precursor by its dedicated, neighboring protease (probably ISF6_0256) releases the active moiety (gasdermin bGSDM, N-terminus) which inserts into membranes, forming pores and triggering cell death. Pore-forming protein that causes membrane permeabilization via a pyroptosis-like activity. Makes ring-like pores with an interior pore diameter of 300-400 Angstroms, when integrated in liposomes. The polypeptide is Gasdermin bGSDM (Piscinibacter sakaiensis (Ideonella sakaiensis)).